The sequence spans 494 residues: V-type proton ATPase subunit B (494 aa).

An ATP-binding site is contributed by Arg-384.

This sequence belongs to the ATPase alpha/beta chains family. In terms of assembly, V-ATPase is a heteromultimeric enzyme made up of two complexes: the ATP-hydrolytic V1 complex and the proton translocation V0 complex. The V1 complex consists of three catalytic AB heterodimers that form a heterohexamer, three peripheral stalks each consisting of EG heterodimers, one central rotor including subunits D and F, and the regulatory subunits C and H. The proton translocation complex V0 consists of the proton transport subunit a, a ring of proteolipid subunits c9c'', rotary subunit d, subunits e and f, and the accessory subunits VhaAC45 and ATP6AP2.

In terms of biological role, non-catalytic subunit of the V1 complex of vacuolar(H+)-ATPase (V-ATPase), a multisubunit enzyme composed of a peripheral complex (V1) that hydrolyzes ATP and a membrane integral complex (V0) that translocates protons. V-ATPase is responsible for acidifying and maintaining the pH of intracellular compartments and in some cell types, is targeted to the plasma membrane, where it is responsible for acidifying the extracellular environment. Essential for the proper assembly and activity of V-ATPase. The protein is V-type proton ATPase subunit B (VHA55) of Manduca sexta (Tobacco hawkmoth).